A 401-amino-acid chain; its full sequence is CinA-like protein (401 aa).

It belongs to the CinA family.

The chain is CinA-like protein from Thermosipho melanesiensis (strain DSM 12029 / CIP 104789 / BI429).